The sequence spans 381 residues: 3-hydroxyisobutyryl-CoA hydrolase, mitochondrial (381 aa).

The transit peptide at 1–25 (MDRLLTISNHIGKNIRQFSTSTEEV) directs the protein to the mitochondrion. Substrate contacts are provided by Glu-116, Gly-141, Glu-164, and Asp-172.

The protein belongs to the enoyl-CoA hydratase/isomerase family.

The protein resides in the mitochondrion. It carries out the reaction 3-hydroxy-2-methylpropanoyl-CoA + H2O = 3-hydroxy-2-methylpropanoate + CoA + H(+). Its pathway is amino-acid degradation; L-valine degradation. Hydrolyzes 3-hydroxyisobutyryl-CoA (HIBYL-CoA), a saline catabolite. This chain is 3-hydroxyisobutyryl-CoA hydrolase, mitochondrial (hibch), found in Dictyostelium discoideum (Social amoeba).